The chain runs to 186 residues: Peptide deformylase (186 aa).

Residues C94 and H136 each coordinate Fe cation. Residue E137 is part of the active site. H140 lines the Fe cation pocket.

Belongs to the polypeptide deformylase family. Requires Fe(2+) as cofactor.

The enzyme catalyses N-terminal N-formyl-L-methionyl-[peptide] + H2O = N-terminal L-methionyl-[peptide] + formate. In terms of biological role, removes the formyl group from the N-terminal Met of newly synthesized proteins. Requires at least a dipeptide for an efficient rate of reaction. N-terminal L-methionine is a prerequisite for activity but the enzyme has broad specificity at other positions. The chain is Peptide deformylase from Prosthecochloris aestuarii (strain DSM 271 / SK 413).